Reading from the N-terminus, the 338-residue chain is Phosphatidate cytidylyltransferase, mitochondrial (338 aa).

This sequence belongs to the TAM41 family. Mg(2+) is required as a cofactor.

It is found in the mitochondrion inner membrane. It catalyses the reaction a 1,2-diacyl-sn-glycero-3-phosphate + CTP + H(+) = a CDP-1,2-diacyl-sn-glycerol + diphosphate. The protein operates within phospholipid metabolism; CDP-diacylglycerol biosynthesis; CDP-diacylglycerol from sn-glycerol 3-phosphate: step 3/3. Functionally, catalyzes the conversion of phosphatidic acid (PA) to CDP-diacylglycerol (CDP-DAG), an essential intermediate in the synthesis of phosphatidylglycerol, cardiolipin and phosphatidylinositol. The sequence is that of Phosphatidate cytidylyltransferase, mitochondrial (tamm41) from Xenopus laevis (African clawed frog).